Here is a 289-residue protein sequence, read N- to C-terminus: MQIIRTIEELRQILAPARRAGKRIGFVPTMGYLHKGHLELVHRSRAENDVTVVSIFVNPLQFGANEDLDKYPRDLERDAALLHRADVDYLFAPAVSDMYPQPMQTVVDVPTLGNQMEGEARPGHFAGVATVVNKLFNIVGADAAYFGEKDFQQLVIIRRMVEDMAIPVRVVGVETVREEDGLACSSRNVYLSPEQRAAAIIVPKALDEAERLYRSGVDDPDALEAAIRTFIATEPLATPEVVALRDPETLERLTAVQGRPVLVALFVRLGTTRLLDNRVIAHVAQEQAA.

Residue 30–37 (MGYLHKGH) coordinates ATP. His37 (proton donor) is an active-site residue. Gln61 is a (R)-pantoate binding site. Gln61 serves as a coordination point for beta-alanine. ATP is bound at residue 147–150 (GEKD). A (R)-pantoate-binding site is contributed by Gln153. Residues Val176 and 184 to 187 (CSSR) contribute to the ATP site.

The protein belongs to the pantothenate synthetase family. As to quaternary structure, homodimer.

Its subcellular location is the cytoplasm. The enzyme catalyses (R)-pantoate + beta-alanine + ATP = (R)-pantothenate + AMP + diphosphate + H(+). Its pathway is cofactor biosynthesis; (R)-pantothenate biosynthesis; (R)-pantothenate from (R)-pantoate and beta-alanine: step 1/1. Catalyzes the condensation of pantoate with beta-alanine in an ATP-dependent reaction via a pantoyl-adenylate intermediate. This is Pantothenate synthetase from Brucella anthropi (strain ATCC 49188 / DSM 6882 / CCUG 24695 / JCM 21032 / LMG 3331 / NBRC 15819 / NCTC 12168 / Alc 37) (Ochrobactrum anthropi).